The sequence spans 1027 residues: Abnormal embryogenesis protein 30 (1027 aa).

WD repeat units lie at residues 18–65 and 70–109; these read RTPF…IQAV and KLDS…VRFS. Disordered regions lie at residues 619–655 and 1005–1027; these read NDSS…ACDL and AMDS…DDDI. 2 stretches are compositionally biased toward acidic residues: residues 625–647 and 1014–1027; these read LEED…EPEG and DNGE…DDDI.

The protein belongs to the APC4 family. The APC/C is probably composed of at least 12 subunits: apc-2, apc-10, apc-11, cdc-26, emb-1, emb-27, emb-30, mat-1, mat-2, mat-3, such-1 and gfi-3.

It participates in protein modification; protein ubiquitination. Functionally, probable component of the anaphase promoting complex/cyclosome (APC/C), a cell cycle-regulated E3 ubiquitin ligase that controls progression through mitosis and the G1 phase of the cell cycle. The APC/C complex acts by mediating ubiquitination and subsequent degradation of target proteins. Developmental role in early embryogenesis and the metaphase to anaphase transition in oocyte and spermatocyte meiosis and mitosis in somatic and germ cells. Required for embryonic anterior-posterior axis formation. Negatively regulates ify-1 protein levels during meiosis I. Plays a role in regulating the abundance of glr-1 receptors in postmitotic neurons, which may in turn control animal locomotion. Involved in regulating GABA neurotransmitter release at neuromuscular junctions in GABA motor neurons. In Caenorhabditis elegans, this protein is Abnormal embryogenesis protein 30.